A 229-amino-acid chain; its full sequence is Type III pantothenate kinase (229 aa).

7–14 (DVGNSSVD) is an ATP binding site. Residues Tyr-78 and 85–88 (GTDR) each bind substrate. Asp-87 functions as the Proton acceptor in the catalytic mechanism. Thr-110 is an ATP binding site. Residue Thr-161 participates in substrate binding.

This sequence belongs to the type III pantothenate kinase family. As to quaternary structure, homodimer. The cofactor is NH4(+). K(+) serves as cofactor.

The protein resides in the cytoplasm. The catalysed reaction is (R)-pantothenate + ATP = (R)-4'-phosphopantothenate + ADP + H(+). It participates in cofactor biosynthesis; coenzyme A biosynthesis; CoA from (R)-pantothenate: step 1/5. Catalyzes the phosphorylation of pantothenate (Pan), the first step in CoA biosynthesis. This Aquifex aeolicus (strain VF5) protein is Type III pantothenate kinase.